A 347-amino-acid chain; its full sequence is Serpentine receptor class beta-2 (347 aa).

Transmembrane regions (helical) follow at residues 27–47 (IAQLWTFVVSILAIPALYIFL), 62–82 (FLLVCYFSASFVFAVLLAFLF), 108–128 (GNLSLTLFMTIQMIMPLGFSI), 146–166 (FLGPLLVFTLIGIDLALLYHV), 194–214 (FWELLYAEIGNFICNCIFLLV), 246–266 (LIVSFTHLLFVGWYLIATIFV), and 288–308 (ITVPTYNLTIVFVGIKALSFM).

Belongs to the nematode receptor-like protein srb family.

It is found in the membrane. The chain is Serpentine receptor class beta-2 (srb-2) from Caenorhabditis elegans.